Here is a 396-residue protein sequence, read N- to C-terminus: L-lactate dehydrogenase (396 aa).

One can recognise an FMN hydroxy acid dehydrogenase domain in the interval 1-380 (MIISAASDYR…SGDSLVQELG (380 aa)). Tyr-24 contributes to the substrate binding site. Residues Ser-106 and Gln-127 each contribute to the FMN site. Position 129 (Tyr-129) interacts with substrate. FMN is bound at residue Thr-155. Arg-164 is a binding site for substrate. FMN is bound at residue Lys-251. Residue His-275 is the Proton acceptor of the active site. Residue Arg-278 participates in substrate binding. Residue 306–330 (DSGIRNGLDVVRMIALGADTVLLGR) coordinates FMN.

This sequence belongs to the FMN-dependent alpha-hydroxy acid dehydrogenase family. The cofactor is FMN.

It is found in the cell inner membrane. The catalysed reaction is (S)-lactate + A = pyruvate + AH2. Its function is as follows. Catalyzes the conversion of L-lactate to pyruvate. Is coupled to the respiratory chain. The sequence is that of L-lactate dehydrogenase from Salmonella typhimurium (strain LT2 / SGSC1412 / ATCC 700720).